The primary structure comprises 449 residues: MKTKNRLLNSDIDFVNESIPYSRSDFNNMLTKLSSNDYYQLMVNTYIGTYGSAKFFGESTKTLPENFNWKTITEFDPPSIVSKKKLISEPENQYLCGNCWAMSTVQTIGDRFVVAGLVNWVPDLSTTFAMLYYPQGQCDGGNSAKLMRQIHTGIGLASKHCIDYSWCSRNIECKTDNSLGHFVSENKSYLLPSKKGCYYNSKHYIYKIDSRPKIISGYGTLNTDNEVLNNQILLKQEILANGPAVGGFLVFENFTSAFTKVNGGVYLENVSNYGSGKPVEFNPHINKYSGNHVVSILGWGVAKGIKISNTQFSDVPYWFCRNTWGKNWGDKGYFKIAMYPFNKKSQFLKLVSIVDHEGHTRRNSGVVICNVSETPILQSLPVIPSTEIPKSLDNSTNFYSQDENYEIKNNSQNEKGFPKGNRRRTTSSDTQIVFIFFLSVVILFIFIIL.

Active-site residues include C99, H292, and N322. A helical membrane pass occupies residues 429–449 (DTQIVFIFFLSVVILFIFIIL).

The protein belongs to the peptidase C1 family.

The protein localises to the membrane. Probable cysteine protease. The sequence is that of Probable cysteine proteinase 224L from Acheta domesticus (House cricket).